The following is a 293-amino-acid chain: Ribosomal protein L11 methyltransferase (293 aa).

The S-adenosyl-L-methionine site is built by threonine 145, glycine 166, aspartate 188, and asparagine 230.

The protein belongs to the methyltransferase superfamily. PrmA family.

The protein localises to the cytoplasm. The enzyme catalyses L-lysyl-[protein] + 3 S-adenosyl-L-methionine = N(6),N(6),N(6)-trimethyl-L-lysyl-[protein] + 3 S-adenosyl-L-homocysteine + 3 H(+). In terms of biological role, methylates ribosomal protein L11. The polypeptide is Ribosomal protein L11 methyltransferase (Shewanella piezotolerans (strain WP3 / JCM 13877)).